Consider the following 547-residue polypeptide: Chaperonin GroEL (547 aa).

Residues 30-33 (TLGP), Lys-51, 87-91 (DGTTT), Gly-415, 479-481 (NAA), and Asp-495 each bind ATP.

The protein belongs to the chaperonin (HSP60) family. In terms of assembly, forms a cylinder of 14 subunits composed of two heptameric rings stacked back-to-back. Interacts with the co-chaperonin GroES.

The protein localises to the cytoplasm. The enzyme catalyses ATP + H2O + a folded polypeptide = ADP + phosphate + an unfolded polypeptide.. In terms of biological role, together with its co-chaperonin GroES, plays an essential role in assisting protein folding. The GroEL-GroES system forms a nano-cage that allows encapsulation of the non-native substrate proteins and provides a physical environment optimized to promote and accelerate protein folding. In Enterobacter sp. (strain 638), this protein is Chaperonin GroEL.